The following is a 517-amino-acid chain: Crotonobetaine/carnitine--CoA ligase (517 aa).

This sequence belongs to the ATP-dependent AMP-binding enzyme family.

The catalysed reaction is 4-(trimethylamino)butanoate + ATP + CoA = 4-(trimethylamino)butanoyl-CoA + AMP + diphosphate. The enzyme catalyses crotonobetaine + ATP + CoA = crotonobetainyl-CoA + AMP + diphosphate. It carries out the reaction (R)-carnitine + ATP + CoA = (R)-carnitinyl-CoA + AMP + diphosphate. The protein operates within amine and polyamine metabolism; carnitine metabolism. Catalyzes the transfer of CoA to carnitine, generating the initial carnitinyl-CoA needed for the CaiB reaction cycle. Also has activity toward crotonobetaine and gamma-butyrobetaine. This chain is Crotonobetaine/carnitine--CoA ligase, found in Escherichia coli O157:H7.